Here is a 1013-residue protein sequence, read N- to C-terminus: Putative helicase mov-10-B.1 (1013 aa).

Composition is skewed to polar residues over residues 91–103 (QWSRPYRSQQNHA) and 113–123 (RPSTTRVSDPS). A disordered region spans residues 91–129 (QWSRPYRSQQNHATPHLNDAISRPSTTRVSDPSSVPEPE). 550 to 557 (GPPGTGKT) is a binding site for ATP. A DEAG box motif is present at residues 672 to 675 (DEAG).

Belongs to the DNA2/NAM7 helicase family. SDE3 subfamily.

It localises to the cytoplasm. It is found in the P-body. The catalysed reaction is ATP + H2O = ADP + phosphate + H(+). Its function is as follows. Probable RNA helicase. Required for RNA-mediated gene silencing by the RNA-induced silencing complex (RISC). Required for both miRNA-mediated translational repression and miRNA-mediated cleavage of complementary mRNAs by RISC. This chain is Putative helicase mov-10-B.1 (mov10b.1), found in Danio rerio (Zebrafish).